A 359-amino-acid chain; its full sequence is Mandelate racemase (359 aa).

The Proton acceptor; specific for S-mandelate role is filled by lysine 166. Residues aspartate 195, glutamate 221, and glutamate 247 each coordinate Mg(2+). Histidine 297 (proton acceptor; specific for R-mandelate) is an active-site residue. Substrate is bound at residue glutamate 317.

It belongs to the mandelate racemase/muconate lactonizing enzyme family. In terms of assembly, homooctamer. The cofactor is Mg(2+).

It carries out the reaction (S)-mandelate = (R)-mandelate. It functions in the pathway aromatic compound metabolism; (R)-mandelate degradation; benzoate from (R)-mandelate: step 1/4. This chain is Mandelate racemase (mdlA), found in Pseudomonas putida (Arthrobacter siderocapsulatus).